A 240-amino-acid chain; its full sequence is Ribonuclease PH (240 aa).

Residues arginine 87 and 125–127 (GTR) each bind phosphate.

Belongs to the RNase PH family. Homohexameric ring arranged as a trimer of dimers.

The enzyme catalyses tRNA(n+1) + phosphate = tRNA(n) + a ribonucleoside 5'-diphosphate. In terms of biological role, phosphorolytic 3'-5' exoribonuclease that plays an important role in tRNA 3'-end maturation. Removes nucleotide residues following the 3'-CCA terminus of tRNAs; can also add nucleotides to the ends of RNA molecules by using nucleoside diphosphates as substrates, but this may not be physiologically important. Probably plays a role in initiation of 16S rRNA degradation (leading to ribosome degradation) during starvation. This Pseudomonas putida (strain GB-1) protein is Ribonuclease PH.